Consider the following 159-residue polypeptide: Ribosomal RNA large subunit methyltransferase H (159 aa).

Residues Leu-76, Gly-108, and 127–132 (FSKMTF) each bind S-adenosyl-L-methionine.

Belongs to the RNA methyltransferase RlmH family. In terms of assembly, homodimer.

The protein localises to the cytoplasm. It catalyses the reaction pseudouridine(1915) in 23S rRNA + S-adenosyl-L-methionine = N(3)-methylpseudouridine(1915) in 23S rRNA + S-adenosyl-L-homocysteine + H(+). Its function is as follows. Specifically methylates the pseudouridine at position 1915 (m3Psi1915) in 23S rRNA. In Clostridium botulinum (strain Langeland / NCTC 10281 / Type F), this protein is Ribosomal RNA large subunit methyltransferase H.